The following is a 240-amino-acid chain: MQVTVLSGAGISAESGVPTFRDAETGLWAQVDPYEISSTDGWQRNPEKVWAWYLWRHYMMARVAPNEAHRTVAAWEDHLDVRVVTQNIDDLHERAGSTNVYHLHGSLFEFRCDACGSAFEGNLPEMPEPVETIDPPVCPCSGLIRPSVVWFGEPLPDAAWNRSVLAVSSADVVIVVGTSSIVYPAAGLPEAALAAGKPVIEVNPERTPLSDSATVSLRETASEALPTLLQRLPELLNRSA.

A Deacetylase sirtuin-type domain is found at 1 to 235 (MQVTVLSGAG…PTLLQRLPEL (235 aa)). 8–28 (GAGISAESGVPTFRDAETGLW) serves as a coordination point for NAD(+). Positions 53 and 56 each coordinate substrate. Position 86–89 (86–89 (QNID)) interacts with NAD(+). His-104 acts as the Proton acceptor in catalysis. Cys-112, Cys-115, Cys-138, and Cys-140 together coordinate Zn(2+). NAD(+) contacts are provided by residues 177 to 179 (GTS), 203 to 205 (NPE), and Ala-221.

Belongs to the sirtuin family. Class III subfamily. As to quaternary structure, interacts with both Ku and LigD; may form a trimeric complex during NHEJ. It depends on Zn(2+) as a cofactor.

Its subcellular location is the cytoplasm. The catalysed reaction is N(6)-succinyl-L-lysyl-[protein] + NAD(+) + H2O = 2''-O-succinyl-ADP-D-ribose + nicotinamide + L-lysyl-[protein]. It carries out the reaction N(6)-acetyl-L-lysyl-[protein] + NAD(+) + H2O = 2''-O-acetyl-ADP-D-ribose + nicotinamide + L-lysyl-[protein]. In terms of biological role, NAD-dependent lysine deacetylase and desuccinylase that specifically removes acetyl and succinyl groups on target proteins. Modulates the activities of several proteins which are inactive in their acylated form. Involved in non-homologous end joining (NHEJ) repair of blunt, 5' overhang and 3' overhang DNA double strand breaks (DSB). Overexpression increases the efficiency of NHEJ of the above DSBs 2-fold with no effect on repair fidelity. This chain is NAD-dependent protein deacylase Sir2 (sir2), found in Mycolicibacterium smegmatis (strain ATCC 700084 / mc(2)155) (Mycobacterium smegmatis).